The sequence spans 418 residues: Queuine tRNA-ribosyltransferase accessory subunit 2 (418 aa).

Residues C325, C327, C330, and H356 each contribute to the Zn(2+) site.

Belongs to the queuine tRNA-ribosyltransferase family. QTRT2 subfamily. As to quaternary structure, heterodimer of a catalytic subunit and an accessory subunit. Zn(2+) is required as a cofactor.

It is found in the cytoplasm. In terms of biological role, non-catalytic subunit of the queuine tRNA-ribosyltransferase (TGT) that catalyzes the base-exchange of a guanine (G) residue with queuine (Q) at position 34 (anticodon wobble position) in tRNAs with GU(N) anticodons (tRNA-Asp, -Asn, -His and -Tyr), resulting in the hypermodified nucleoside queuosine (7-(((4,5-cis-dihydroxy-2-cyclopenten-1-yl)amino)methyl)-7-deazaguanosine). The polypeptide is Queuine tRNA-ribosyltransferase accessory subunit 2 (Drosophila melanogaster (Fruit fly)).